A 584-amino-acid chain; its full sequence is AP-1-like transcription factor yap1 (584 aa).

Residues 23-179 (LAALSSNQPP…AFRERKEKHL (157 aa)) form a disordered region. Residues 35–42 (QQNDKQRS) carry the Bipartite nuclear localization signal motif. Positions 36–48 (QNDKQRSQAKTDP) are enriched in basic and acidic residues. A compositionally biased stretch (low complexity) spans 52-67 (PGNMSSGSFSMSPGFN). A Bipartite nuclear localization signal motif is present at residues 68-75 (KTHPGSGG). A compositionally biased stretch (acidic residues) spans 79–94 (GDDESPFLDFNPELDF). Basic and acidic residues-rich tracts occupy residues 112–144 (SEEH…DKAA) and 170–179 (AFRERKEKHL). A bZIP domain is found at 154–217 (SEPTSKRKAQ…ERLQVELREY (64 aa)). Residues 159-180 (KRKAQNRAAQRAFRERKEKHLK) are basic motif. The tract at residues 182–189 (LETKVDEL) is leucine-zipper. The tract at residues 211–332 (QVELREYRKR…PSPKVPSVYN (122 aa)) is transcription activation 1. Disordered regions lie at residues 267–379 (IFNG…TKLN) and 418–441 (RGKS…TPGP). A n-CRD region spans residues 284–296 (SSPATSDSQVPGV). Polar residues predominate over residues 300-309 (ETLNGSNNRG). Low complexity predominate over residues 336–362 (SASSHDSSNSCSPSSSSDSHQSQMLSS). Composition is skewed to polar residues over residues 363–379 (NGTS…TKLN) and 422–437 (ESVS…NYEQ). The interval 377-480 (KLNDSVQNHH…SQDFGTFFDD (104 aa)) is transcription activation 2. Cystine bridges form between Cys-531/Cys-555, Cys-531/Cys-564, and Cys-555/Cys-564. Residues 531 to 564 (CTKIWDRLQSMEKFRNGEIDVDNLCSELRTKARC) form a c-CRD region. Positions 549-556 (IDVDNLCS) match the Nuclear export signal motif.

It belongs to the bZIP family. YAP subfamily. Post-translationally, depending on the oxidative stress inducing agent, yap1 can undergo two distinct conformational changes, both involving disulfide bond formation, and both masking the nuclear export signal, thus abolishing nuclear export.

Its subcellular location is the nucleus. The protein localises to the cytoplasm. Its function is as follows. Transcription activator involved in oxidative stress response and redox homeostasis. Regulates the transcription of genes encoding antioxidant enzymes and components of the cellular thiol-reducing pathways. May be involved in antifungal resistance to voriconazole. The chain is AP-1-like transcription factor yap1 from Aspergillus flavus (strain ATCC 200026 / FGSC A1120 / IAM 13836 / NRRL 3357 / JCM 12722 / SRRC 167).